Here is a 350-residue protein sequence, read N- to C-terminus: MSDVQVRNNWKRDEIETLFALPMNDLLFQAHSVHRQEFDPNEVQISRLLSIKTGACPEDCKYCPQSARYDTGLEKERLLAMETVLTEARSAKAAGASRFCMGAAWRNPKERDMPYLKTMVEEVKSLGMETCMTLGMLSADQASELADAGLDYYNHNLDTSPEYYGDVITTRTYQNRLDTLSNVRASGMKVCSGGIVGMGEKATDRAGLLQQLANLDKHPDSVPINMLVKVEGTPFEKIDDLDPLEFVRTIAVARIIMPKSRVRLSAGRENMTDELQAMCFFAGANSIFYGCKLLTTPNPEENDDMSLFRRLGLHPEQGIAATKEQDEAMLAKAAAQQDKKASAFYDAGAL.

Residues 41 to 268 (NEVQISRLLS…KSRVRLSAGR (228 aa)) enclose the Radical SAM core domain. Cys-56, Cys-60, and Cys-63 together coordinate [4Fe-4S] cluster. [2Fe-2S] cluster-binding residues include Cys-100, Cys-131, Cys-191, and Arg-263.

Belongs to the radical SAM superfamily. Biotin synthase family. Homodimer. [4Fe-4S] cluster is required as a cofactor. The cofactor is [2Fe-2S] cluster.

It catalyses the reaction (4R,5S)-dethiobiotin + (sulfur carrier)-SH + 2 reduced [2Fe-2S]-[ferredoxin] + 2 S-adenosyl-L-methionine = (sulfur carrier)-H + biotin + 2 5'-deoxyadenosine + 2 L-methionine + 2 oxidized [2Fe-2S]-[ferredoxin]. The protein operates within cofactor biosynthesis; biotin biosynthesis; biotin from 7,8-diaminononanoate: step 2/2. Catalyzes the conversion of dethiobiotin (DTB) to biotin by the insertion of a sulfur atom into dethiobiotin via a radical-based mechanism. The protein is Biotin synthase of Shewanella piezotolerans (strain WP3 / JCM 13877).